A 504-amino-acid chain; its full sequence is Galactokinase (504 aa).

Residues R47, D53, H54, and D56 each coordinate alpha-D-galactose. ATP is bound by residues G150, G152, S154, and S155. Alpha-D-galactose contacts are provided by N196 and D200. The active-site Proton acceptor is D200. S244, N245, and K246 together coordinate ATP. Y254 serves as a coordination point for alpha-D-galactose.

This sequence belongs to the GHMP kinase family. GalK subfamily.

It catalyses the reaction alpha-D-galactose + ATP = alpha-D-galactose 1-phosphate + ADP + H(+). It functions in the pathway carbohydrate metabolism; galactose metabolism. Functionally, galactokinase is a key enzyme in the galactose metabolism where it catalyzes the conversion of alpha-D-galactose to galactose 1-phosphate. Can also induce the transcription of the gal genes in response to the organism being challenged with galactose as the sole source of carbon. The protein is Galactokinase of Candida parapsilosis (Yeast).